The primary structure comprises 299 residues: tRNA pseudouridine synthase B (299 aa).

Aspartate 45 serves as the catalytic Nucleophile.

This sequence belongs to the pseudouridine synthase TruB family. Type 1 subfamily.

It carries out the reaction uridine(55) in tRNA = pseudouridine(55) in tRNA. Its function is as follows. Responsible for synthesis of pseudouridine from uracil-55 in the psi GC loop of transfer RNAs. This is tRNA pseudouridine synthase B from Streptomyces griseus subsp. griseus (strain JCM 4626 / CBS 651.72 / NBRC 13350 / KCC S-0626 / ISP 5235).